The following is a 3462-amino-acid chain: DNA-directed RNA polymerase subunit beta'' (3462 aa).

C263, C335, C342, and C345 together coordinate Zn(2+). Residues K541 to F1085 are insert-1. The segment at P1528–G1585 is insert-2. The insert-3 stretch occupies residues K1602–L1699. Residues L1938–N2168 are insert-4. Residues N2320 to F2870 form an insert-5 region. Positions S2972–E3196 are insert-6.

This sequence belongs to the RNA polymerase beta' chain family. RpoC2 subfamily. In terms of assembly, in plastids the minimal PEP RNA polymerase catalytic core is composed of four subunits: alpha, beta, beta', and beta''. When a (nuclear-encoded) sigma factor is associated with the core the holoenzyme is formed, which can initiate transcription. Zn(2+) is required as a cofactor.

It localises to the plastid. Its subcellular location is the chloroplast. It catalyses the reaction RNA(n) + a ribonucleoside 5'-triphosphate = RNA(n+1) + diphosphate. DNA-dependent RNA polymerase catalyzes the transcription of DNA into RNA using the four ribonucleoside triphosphates as substrates. The polypeptide is DNA-directed RNA polymerase subunit beta'' (Tupiella akineta (Green alga)).